The primary structure comprises 467 residues: MTCRTRFAPSPTGYLHIGGARTALYCWLEARHRGGQFVLRIEDTDRERSTQAAIDAILEAMDWLGLGYDEGPIYQTQRIARYQEVAEQLLAQGKAYYAYETREELDAMREAAMAKQEKPRFNGAAREQNLPYRDDPNRVIRFKNPIGGTVVFEDLIKGCIEIANSELDDMVIFRPDGFPTYNFAVVVDDWDMGITEVIRGDDHINNTPRQINIYEALGAPVPRFAHMPMILDEQGAKLSKRTGAADVMQYKDAGYLPHALINYLARLGWSHGDQELFTRQELLDLFDVKDVNSKAARLDMAKLGWVNQHYLKTDDPASIAPQLEYQLAKLGVDIAAGPAAADVVVALRERVQTLKEMAEKAVVWYQPLETYDEAAVMKHLKLGAEVPLGKARELLAAVDAWSVENVSAALHDAAAALELGMGKIAQPLRVAITGTQVSPDISQTVYLAGREGALKRIDAALIKIGAA.

The 'HIGH' region motif lies at 9-19 (PSPTGYLHIGG). A 'KMSKS' region motif is present at residues 237 to 241 (KLSKR). An ATP-binding site is contributed by Lys-240.

It belongs to the class-I aminoacyl-tRNA synthetase family. Glutamate--tRNA ligase type 1 subfamily. In terms of assembly, monomer.

The protein resides in the cytoplasm. It catalyses the reaction tRNA(Glu) + L-glutamate + ATP = L-glutamyl-tRNA(Glu) + AMP + diphosphate. In terms of biological role, catalyzes the attachment of glutamate to tRNA(Glu) in a two-step reaction: glutamate is first activated by ATP to form Glu-AMP and then transferred to the acceptor end of tRNA(Glu). This chain is Glutamate--tRNA ligase, found in Xanthomonas euvesicatoria pv. vesicatoria (strain 85-10) (Xanthomonas campestris pv. vesicatoria).